Here is a 265-residue protein sequence, read N- to C-terminus: Shikimate dehydrogenase (NADP(+)) (265 aa).

Residues 15–17 (SLS) and Thr62 contribute to the shikimate site. The active-site Proton acceptor is the Lys66. Shikimate-binding residues include Asn87 and Asp102. Residues 125–129 (GAGGA), 149–154 (NRTLEK), and Leu209 contribute to the NADP(+) site. Tyr211 contacts shikimate. Gly233 provides a ligand contact to NADP(+).

The protein belongs to the shikimate dehydrogenase family. In terms of assembly, homodimer.

The enzyme catalyses shikimate + NADP(+) = 3-dehydroshikimate + NADPH + H(+). It functions in the pathway metabolic intermediate biosynthesis; chorismate biosynthesis; chorismate from D-erythrose 4-phosphate and phosphoenolpyruvate: step 4/7. Functionally, involved in the biosynthesis of the chorismate, which leads to the biosynthesis of aromatic amino acids. Catalyzes the reversible NADPH linked reduction of 3-dehydroshikimate (DHSA) to yield shikimate (SA). This chain is Shikimate dehydrogenase (NADP(+)), found in Legionella pneumophila subsp. pneumophila (strain Philadelphia 1 / ATCC 33152 / DSM 7513).